Here is a 60-residue protein sequence, read N- to C-terminus: Large ribosomal subunit protein uL30 (60 aa).

It belongs to the universal ribosomal protein uL30 family. In terms of assembly, part of the 50S ribosomal subunit.

The sequence is that of Large ribosomal subunit protein uL30 from Ligilactobacillus salivarius (strain UCC118) (Lactobacillus salivarius).